The primary structure comprises 416 residues: Vacuole membrane protein KMS2 (416 aa).

N-acetylglycine is present on Gly2. Residues 2-59 lie on the Cytoplasmic side of the membrane; it reads GYGNRASSKTPAISGLREKHQQDLEKLTLTSQPFKTLRLFVVAVFLYVRRWSSYLLAN. Residues 60-80 form a helical membrane-spanning segment; that stretch reads VGWLILFCSIFVAFAALLVTL. The Lumenal portion of the chain corresponds to 81–100; that stretch reads DGPHVKHVEELSEYTRFGLW. The chain crosses the membrane as a helical span at residues 101-123; it reads WIFLGVASSIGLGSGLHTFVLYL. Residues 124–249 lie on the Cytoplasmic side of the membrane; it reads GPHIALFTIK…WLLSHSQYLN (126 aa). Residues 250-270 form a helical membrane-spanning segment; the sequence is FFTILILASVPNPLFDLAGIM. Topologically, residues 271 to 281 are lumenal; the sequence is CGQFEKPFWEF. The helical transmembrane segment at 282–304 threads the bilayer; that stretch reads FLATLIGKAIIKTHIQTVFIICV. Topologically, residues 305–315 are cytoplasmic; sequence CNNQLLDWVEN. The chain crosses the membrane as a helical span at residues 316–336; it reads ELIYILSFVPGFASALPELTA. Over 337–364 the chain is Lumenal; the sequence is KLRLMKEKYLIASPPVSSDINVKKWDLS. The chain crosses the membrane as a helical span at residues 365–385; that stretch reads FASVWNGVVWLMLLNFFGQIV. Topologically, residues 386–416 are cytoplasmic; sequence TSTAQRYLKKQQEEELDALTNKSSLTSKKSK.

This sequence belongs to the VMP1 family.

It localises to the endoplasmic reticulum membrane. Its function is as follows. Involved in the early secretory pathway. Required for the correct export of secretory products from the endoplasmic reticulum (ER) and involved in the maintenance of ER integrity. The polypeptide is Vacuole membrane protein KMS2 (Arabidopsis thaliana (Mouse-ear cress)).